We begin with the raw amino-acid sequence, 143 residues long: Large ribosomal subunit protein uL13 (143 aa).

This sequence belongs to the universal ribosomal protein uL13 family. As to quaternary structure, part of the 50S ribosomal subunit.

This protein is one of the early assembly proteins of the 50S ribosomal subunit, although it is not seen to bind rRNA by itself. It is important during the early stages of 50S assembly. The protein is Large ribosomal subunit protein uL13 of Geobacter sulfurreducens (strain ATCC 51573 / DSM 12127 / PCA).